The primary structure comprises 318 residues: Transaldolase (318 aa).

The Schiff-base intermediate with substrate role is filled by Lys132.

This sequence belongs to the transaldolase family. Type 1 subfamily. As to quaternary structure, homodimer.

Its subcellular location is the cytoplasm. The catalysed reaction is D-sedoheptulose 7-phosphate + D-glyceraldehyde 3-phosphate = D-erythrose 4-phosphate + beta-D-fructose 6-phosphate. It participates in carbohydrate degradation; pentose phosphate pathway; D-glyceraldehyde 3-phosphate and beta-D-fructose 6-phosphate from D-ribose 5-phosphate and D-xylulose 5-phosphate (non-oxidative stage): step 2/3. Transaldolase is important for the balance of metabolites in the pentose-phosphate pathway. This chain is Transaldolase, found in Shewanella sp. (strain ANA-3).